A 160-amino-acid polypeptide reads, in one-letter code: Cytochrome b6-f complex subunit 4 (160 aa).

A run of 3 helical transmembrane segments spans residues 36–56 (LLYI…GLAV), 95–115 (LLGV…PFLE), and 131–151 (TVFL…TLPI).

This sequence belongs to the cytochrome b family. PetD subfamily. The 4 large subunits of the cytochrome b6-f complex are cytochrome b6, subunit IV (17 kDa polypeptide, petD), cytochrome f and the Rieske protein, while the 4 small subunits are petG, petL, petM and petN. The complex functions as a dimer.

The protein localises to the plastid. It localises to the chloroplast thylakoid membrane. Its function is as follows. Component of the cytochrome b6-f complex, which mediates electron transfer between photosystem II (PSII) and photosystem I (PSI), cyclic electron flow around PSI, and state transitions. The chain is Cytochrome b6-f complex subunit 4 from Coffea arabica (Arabian coffee).